The sequence spans 156 residues: Putative pre-16S rRNA nuclease (156 aa).

Belongs to the YqgF nuclease family.

Its subcellular location is the cytoplasm. Its function is as follows. Could be a nuclease involved in processing of the 5'-end of pre-16S rRNA. The polypeptide is Putative pre-16S rRNA nuclease (Caulobacter vibrioides (strain ATCC 19089 / CIP 103742 / CB 15) (Caulobacter crescentus)).